A 634-amino-acid chain; its full sequence is Probable beta-glucosidase C (634 aa).

Positions 1–19 (MRIDCTVASLTALASGCQA) are cleaved as a signal peptide. Asparagine 90, asparagine 112, asparagine 219, and asparagine 270 each carry an N-linked (GlcNAc...) asparagine glycan. Aspartate 337 is a catalytic residue. N-linked (GlcNAc...) asparagine glycosylation is found at asparagine 360, asparagine 476, asparagine 484, and asparagine 524.

The protein belongs to the glycosyl hydrolase 3 family.

The protein localises to the secreted. It carries out the reaction Hydrolysis of terminal, non-reducing beta-D-glucosyl residues with release of beta-D-glucose.. It functions in the pathway glycan metabolism; cellulose degradation. Beta-glucosidases are one of a number of cellulolytic enzymes involved in the degradation of cellulosic biomass. Catalyzes the last step releasing glucose from the inhibitory cellobiose. This chain is Probable beta-glucosidase C (bglC), found in Aspergillus flavus (strain ATCC 200026 / FGSC A1120 / IAM 13836 / NRRL 3357 / JCM 12722 / SRRC 167).